A 288-amino-acid polypeptide reads, in one-letter code: Oxaloacetate decarboxylase (288 aa).

Serine 47 contacts substrate. Residue aspartate 85 coordinates Mg(2+). The substrate site is built by arginine 156 and histidine 232.

It belongs to the isocitrate lyase/PEP mutase superfamily. Oxaloacetate decarboxylase family. In terms of assembly, homotetramer; dimer of dimers. The cofactor is Mg(2+).

The catalysed reaction is oxaloacetate + H(+) = pyruvate + CO2. Functionally, catalyzes the decarboxylation of oxaloacetate into pyruvate. Seems to play a role in maintaining cellular concentrations of bicarbonate and pyruvate. This is Oxaloacetate decarboxylase from Rhodopseudomonas palustris (strain TIE-1).